A 139-amino-acid polypeptide reads, in one-letter code: Large ribosomal subunit protein uL16 (139 aa).

It belongs to the universal ribosomal protein uL16 family. In terms of assembly, part of the 50S ribosomal subunit.

Its function is as follows. Binds 23S rRNA and is also seen to make contacts with the A and possibly P site tRNAs. In Chlorobium phaeobacteroides (strain DSM 266 / SMG 266 / 2430), this protein is Large ribosomal subunit protein uL16.